A 305-amino-acid chain; its full sequence is Ribonucleoside-diphosphate reductase small subunit (305 aa).

Fe cation-binding residues include E64, E94, and H97. Y101 is a catalytic residue. A helical membrane pass occupies residues 150 to 170 (VLIFYLIEGVFFISSFYCIGL). Fe cation contacts are provided by E157, E191, and H194.

This sequence belongs to the ribonucleoside diphosphate reductase small chain family. Heterotetramer composed of a homodimer of the large subunit (R1) and a homodimer of the small subunit (R2). Larger multisubunit protein complex are also active, composed of (R1)n(R2)n. The cofactor is Fe cation.

The protein localises to the host membrane. It carries out the reaction a 2'-deoxyribonucleoside 5'-diphosphate + [thioredoxin]-disulfide + H2O = a ribonucleoside 5'-diphosphate + [thioredoxin]-dithiol. Ribonucleoside-diphosphate reductase holoenzyme provides the precursors necessary for viral DNA synthesis. Allows virus growth in non-dividing cells, as well as reactivation from latency in infected hosts. Catalyzes the biosynthesis of deoxyribonucleotides from the corresponding ribonucleotides. The protein is Ribonucleoside-diphosphate reductase small subunit of Alcelaphine herpesvirus 1 (strain C500) (AlHV-1).